Consider the following 353-residue polypeptide: tRNA N(3)-cytidine methyltransferase METTL2 (353 aa).

The segment at 1–37 (MAAPVVAADSPVIENMPETAGGATENSAEAQKRPQFG) is disordered. S-adenosyl-L-methionine contacts are provided by Trp93, Tyr97, Gly165, Asp190, Asp216, and Ile237.

The protein belongs to the methyltransferase superfamily. METL family. As to quaternary structure, monomer.

The protein localises to the cytoplasm. The enzyme catalyses cytidine(32) in tRNA(Thr) + S-adenosyl-L-methionine = N(3)-methylcytidine(32) in tRNA(Thr) + S-adenosyl-L-homocysteine + H(+). The catalysed reaction is cytidine(32) in tRNA(Arg)(CCU) + S-adenosyl-L-methionine = N(3)-methylcytidine(32) in tRNA(Arg)(CCU) + S-adenosyl-L-homocysteine + H(+). In terms of biological role, S-adenosyl-L-methionine-dependent methyltransferase that mediates N(3)-methylcytidine modification of residue 32 of the tRNA anticodon loop of tRNA(Thr)(UGU) and tRNA(Arg)(CCU). N(3)-methylcytidine methylation by mettl2a requires the N6-threonylcarbamoylation of tRNA (t6A37) by the EKC/KEOPS complex as prerequisite. The protein is tRNA N(3)-cytidine methyltransferase METTL2 (mettl2a) of Danio rerio (Zebrafish).